The primary structure comprises 479 residues: Anaerobic nitric oxide reductase flavorubredoxin (479 aa).

Residues 30-210 (LRGSSYNSYL…PFSRLVTPKI (181 aa)) form a zinc metallo-hydrolase region. Fe cation contacts are provided by H79, E81, D83, H147, D166, and H227. Residues 254–393 (ITIVYDTMSN…LCREHGREIA (140 aa)) enclose the Flavodoxin-like domain. FMN is bound by residues 260–264 (TMSNN) and 342–369 (AFGS…EMSL). The Rubredoxin-like domain maps to 423-474 (GPRMQCSVCQWIYDPAKGEPMQDVAPGTPWSEVPDNFLCPECSLGKDVFDEL). Residues C428, C431, C461, and C464 each coordinate Fe cation.

The protein in the N-terminal section; belongs to the zinc metallo-hydrolase group 3 family. As to quaternary structure, homotetramer. Fe cation serves as cofactor. FMN is required as a cofactor.

It is found in the cytoplasm. Its pathway is nitrogen metabolism; nitric oxide reduction. In terms of biological role, anaerobic nitric oxide reductase; uses NADH to detoxify nitric oxide (NO), protecting several 4Fe-4S NO-sensitive enzymes. Has at least 2 reductase partners, only one of which (NorW, flavorubredoxin reductase) has been identified. NO probably binds to the di-iron center; electrons enter from the NorW at rubredoxin and are transferred sequentially to the FMN center and the di-iron center. Also able to function as an aerobic oxygen reductase. The chain is Anaerobic nitric oxide reductase flavorubredoxin from Escherichia coli (strain UTI89 / UPEC).